Here is a 242-residue protein sequence, read N- to C-terminus: Small ribosomal subunit protein uS3 (242 aa).

A KH type-2 domain is found at 39 to 110 (IRKFIHKKYG…QVRINVVEVE (72 aa)). The tract at residues 216–242 (QPMPVGAAPRRRASRRPQQFEDRSNEG) is disordered. Residues 233-242 (QQFEDRSNEG) show a composition bias toward basic and acidic residues.

Belongs to the universal ribosomal protein uS3 family. As to quaternary structure, part of the 30S ribosomal subunit. Forms a tight complex with proteins S10 and S14.

Functionally, binds the lower part of the 30S subunit head. Binds mRNA in the 70S ribosome, positioning it for translation. The chain is Small ribosomal subunit protein uS3 from Synechococcus sp. (strain CC9605).